Here is a 376-residue protein sequence, read N- to C-terminus: Phytanoyl-CoA hydroxylase-interacting protein-like (376 aa).

In terms of domain architecture, Fibronectin type-III spans 52–161; the sequence is VPHNIKISNI…EIIEFCTADY (110 aa).

It belongs to the PHYHIP family.

May play a role in the development of the central system. This Xenopus laevis (African clawed frog) protein is Phytanoyl-CoA hydroxylase-interacting protein-like (phyhipl).